Reading from the N-terminus, the 372-residue chain is Cytochrome b (372 aa).

The next 4 membrane-spanning stretches (helical) occupy residues 25-45, 69-90, 105-125, and 170-190; these read FGSMLLTCLALQTMTGFFLAI, WMMQNLHAIGASMFFICIYIHI, WLSGTTLLIILMATAFFGYVL, and FFALHFILPFTIISMSSIHIM. Residues His-75 and His-89 each contribute to the heme b site. His-174 and His-188 together coordinate heme b. His-193 lines the a ubiquinone pocket. Helical transmembrane passes span 218–238, 280–300, 312–332, and 339–358; these read HKDMLMLTIMMTALFIIMSFM, LGGTVALVLSVTILMTMPFTH, LMQFMFWTLVATFITITWAAT, and FTTIGQATAILYFTFFIMNP.

It belongs to the cytochrome b family. The cytochrome bc1 complex contains 3 respiratory subunits (MT-CYB, CYC1 and UQCRFS1), 2 core proteins (UQCRC1 and UQCRC2) and probably 6 low-molecular weight proteins. Requires heme b as cofactor.

The protein resides in the mitochondrion inner membrane. In terms of biological role, component of the ubiquinol-cytochrome c reductase complex (complex III or cytochrome b-c1 complex) that is part of the mitochondrial respiratory chain. The b-c1 complex mediates electron transfer from ubiquinol to cytochrome c. Contributes to the generation of a proton gradient across the mitochondrial membrane that is then used for ATP synthesis. The protein is Cytochrome b (MT-CYB) of Pantherophis obsoletus (Black ratsnake).